Consider the following 90-residue polypeptide: U7-theraphotoxin-Hhn1a 7 (90 aa).

Positions Met1–Ser19 are cleaved as a signal peptide. A propeptide spanning residues Phe20–Glu50 is cleaved from the precursor. Disulfide bonds link Cys51–Cys65, Cys58–Cys70, and Cys64–Cys81.

It belongs to the neurotoxin 10 (Hwtx-1) family. 13 (Hntx-13) subfamily. Expressed by the venom gland.

The protein resides in the secreted. Its function is as follows. Ion channel inhibitor. This Cyriopagopus hainanus (Chinese bird spider) protein is U7-theraphotoxin-Hhn1a 7.